The sequence spans 471 residues: tRNA modification GTPase MnmE (471 aa).

3 residues coordinate (6S)-5-formyl-5,6,7,8-tetrahydrofolate: Arg26, Glu83, and Lys136. The TrmE-type G domain occupies 232–393 (GLRVVLAGQP…LRRRLLQLAG (162 aa)). Residue Asn242 coordinates K(+). GTP-binding positions include 242-247 (NVGKSS), 261-267 (TPIAGTT), 286-289 (DTAG), 354-357 (NKAD), and 374-376 (SAR). A Mg(2+)-binding site is contributed by Ser246. K(+) contacts are provided by Thr261, Ile263, and Thr266. Thr267 provides a ligand contact to Mg(2+). Lys471 lines the (6S)-5-formyl-5,6,7,8-tetrahydrofolate pocket.

The protein belongs to the TRAFAC class TrmE-Era-EngA-EngB-Septin-like GTPase superfamily. TrmE GTPase family. In terms of assembly, homodimer. Heterotetramer of two MnmE and two MnmG subunits. K(+) is required as a cofactor.

It is found in the cytoplasm. Functionally, exhibits a very high intrinsic GTPase hydrolysis rate. Involved in the addition of a carboxymethylaminomethyl (cmnm) group at the wobble position (U34) of certain tRNAs, forming tRNA-cmnm(5)s(2)U34. This is tRNA modification GTPase MnmE from Methylibium petroleiphilum (strain ATCC BAA-1232 / LMG 22953 / PM1).